A 536-amino-acid polypeptide reads, in one-letter code: Ecdysone receptor (536 aa).

The interval 1–114 is modulating; sequence MKTENLIVTT…GPVPRQQEEL (114 aa). Positions 77–107 are disordered; sequence SPNSKLDDGNMSVHMGDGLDGKKSSSKKGPV. 2 NR C4-type zinc fingers span residues 115–135 and 151–175; these read CLVC…CEGC and CKFG…LKKC. A DNA-binding region (nuclear receptor) is located at residues 115–187; it reads CLVCGDRASG…VGMRPECVVP (73 aa). The NR LBD domain occupies 278–514; it reads NQVAVIYKLI…FLEEVWDVGD (237 aa).

It belongs to the nuclear hormone receptor family. NR1 subfamily.

It localises to the nucleus. Functionally, receptor for ecdysone. Binds to ecdysone response elements (ECRES). The protein is Ecdysone receptor (EcR) of Chironomus tentans (Midge).